The chain runs to 291 residues: Cell division control protein 2 homolog 1 (291 aa).

Residues 1–284 enclose the Protein kinase domain; the sequence is GENVEKIGEG…ARSAVEHEYF (284 aa). ATP is bound by residues 7 to 15 and Lys30; that span reads IGEGTYGVV. Residue Thr11 is modified to Phosphothreonine. Tyr12 carries the post-translational modification Phosphotyrosine. Asp124 acts as the Proton acceptor in catalysis. Thr158 is subject to Phosphothreonine; by CAK.

This sequence belongs to the protein kinase superfamily. CMGC Ser/Thr protein kinase family. CDC2/CDKX subfamily. As to expression, found in most organs including root, young leaf, stem, vegetative meristem and flower bud.

The enzyme catalyses L-seryl-[protein] + ATP = O-phospho-L-seryl-[protein] + ADP + H(+). The catalysed reaction is L-threonyl-[protein] + ATP = O-phospho-L-threonyl-[protein] + ADP + H(+). It carries out the reaction [DNA-directed RNA polymerase] + ATP = phospho-[DNA-directed RNA polymerase] + ADP + H(+). With respect to regulation, phosphorylation at Thr-11 or Tyr-12 inactivates the enzyme, while phosphorylation at Thr-158 activates it. Plays a key role in the control of the eukaryotic cell cycle. Component of the kinase complex that phosphorylates the repetitive C-terminus of RNA polymerase II. The sequence is that of Cell division control protein 2 homolog 1 (CDC2A) from Medicago sativa (Alfalfa).